We begin with the raw amino-acid sequence, 454 residues long: GA-binding protein alpha chain (454 aa).

A PNT domain is found at 168-251 (AALEGYRKEQ…SHLELLRKYV (84 aa)). Residues 295-316 (KVQRSPRISGEDRSSPGNRTGN) are disordered. Residue Ser303 is modified to Phosphoserine. Residues 320–400 (IQLWQFLLEL…QGKRFVYKFV (81 aa)) constitute a DNA-binding region (ETS).

This sequence belongs to the ETS family. Heterotetramer of two alpha and two beta subunits. Ubiquitous.

The protein resides in the nucleus. Functionally, transcription factor capable of interacting with purine rich repeats (GA repeats). Positively regulates transcription of transcriptional repressor Rhit/Zpf13. The chain is GA-binding protein alpha chain (Gabpa) from Mus musculus (Mouse).